The following is a 92-amino-acid chain: UPF0250 protein Smlt4048 (92 aa).

This sequence belongs to the UPF0250 family.

The chain is UPF0250 protein Smlt4048 from Stenotrophomonas maltophilia (strain K279a).